The chain runs to 124 residues: Large ribosomal subunit protein eL33 (124 aa).

Alanine 2 carries the N-acetylalanine modification.

It belongs to the eukaryotic ribosomal protein eL33 family.

In Caenorhabditis elegans, this protein is Large ribosomal subunit protein eL33.